We begin with the raw amino-acid sequence, 358 residues long: MLKTPLYESHLAANAKMVDFSGWSMPINYGSQIQEHNNVRENCGVFDVSHMLAVDIQGKDAEKFLRHILANDVAKLEAGKAQYGCMLNHEAGIVDDLITYKIDSENFRIVVNAGNRESDVAWFRENSQDLDVKITPQQNLAIVAVQGPKAVEIVKHTVTTEVAEEIAKLKPFTFKFFSNWMFARTGYTGEDGFEIMLPADQVADFWDNLLENGAEPAGLGARDTLRLEAGMHLYGSDMNTTTTPLERGLGWSVDLSDENRDFIGKKAYLTKKSHGITTKWTGVVLKSKGVLRAGQEIDFDNGEKGYITSGSFSPTLKVAIALAYVPKEGANPIVNIRGKELEVELVKAKFVKNGQSLI.

This sequence belongs to the GcvT family. The glycine cleavage system is composed of four proteins: P, T, L and H.

It catalyses the reaction N(6)-[(R)-S(8)-aminomethyldihydrolipoyl]-L-lysyl-[protein] + (6S)-5,6,7,8-tetrahydrofolate = N(6)-[(R)-dihydrolipoyl]-L-lysyl-[protein] + (6R)-5,10-methylene-5,6,7,8-tetrahydrofolate + NH4(+). The glycine cleavage system catalyzes the degradation of glycine. This Francisella philomiragia subsp. philomiragia (strain ATCC 25017 / CCUG 19701 / FSC 153 / O#319-036) protein is Aminomethyltransferase.